The sequence spans 472 residues: 6-phosphogluconate dehydrogenase, decarboxylating (472 aa).

Residues 10 to 15 (GMAVMG), 33 to 35 (NRT), 74 to 76 (VQA), and asparagine 102 each bind NADP(+). Substrate is bound by residues asparagine 102 and 128 to 130 (SGG). The Proton acceptor role is filled by lysine 184. 187 to 188 (HN) is a binding site for substrate. Residue glutamate 191 is the Proton donor of the active site. Tyrosine 192, lysine 262, arginine 289, arginine 447, and histidine 453 together coordinate substrate.

This sequence belongs to the 6-phosphogluconate dehydrogenase family. As to quaternary structure, homodimer.

The catalysed reaction is 6-phospho-D-gluconate + NADP(+) = D-ribulose 5-phosphate + CO2 + NADPH. The protein operates within carbohydrate degradation; pentose phosphate pathway; D-ribulose 5-phosphate from D-glucose 6-phosphate (oxidative stage): step 3/3. In terms of biological role, catalyzes the oxidative decarboxylation of 6-phosphogluconate to ribulose 5-phosphate and CO(2), with concomitant reduction of NADP to NADPH. The sequence is that of 6-phosphogluconate dehydrogenase, decarboxylating (gnd) from Lactococcus lactis subsp. cremoris (strain MG1363).